A 210-amino-acid chain; its full sequence is MKTVPTLSFSKLGCSRGGRQLFQNIDCVLESGHWLYVAGANGVGKTSLLRMVCGLAPIESGEIFWNGTPIHAQADAYRQDLCYLGHLNALQESMTVHENLAFTAALGGMAPDMAQTQSVLAHFGVAGRDRQLVRHLSQGQKRRVALSRLALSQARLWVLDEPFVAMDEAGVRMLADLIAAHLTQGGLAVLTSHQQVDIGAIPAQLLELRA.

Residues 4 to 208 (VPTLSFSKLG…GAIPAQLLEL (205 aa)) enclose the ABC transporter domain. 39-46 (GANGVGKT) is an ATP binding site.

This sequence belongs to the ABC transporter superfamily. CcmA exporter (TC 3.A.1.107) family. As to quaternary structure, the complex is composed of two ATP-binding proteins (CcmA) and two transmembrane proteins (CcmB).

It is found in the cell inner membrane. The enzyme catalyses heme b(in) + ATP + H2O = heme b(out) + ADP + phosphate + H(+). Part of the ABC transporter complex CcmAB involved in the biogenesis of c-type cytochromes; once thought to export heme, this seems not to be the case, but its exact role is uncertain. Responsible for energy coupling to the transport system. The polypeptide is Cytochrome c biogenesis ATP-binding export protein CcmA (Albidiferax ferrireducens (strain ATCC BAA-621 / DSM 15236 / T118) (Rhodoferax ferrireducens)).